We begin with the raw amino-acid sequence, 284 residues long: Transcription factor lir-3 (284 aa).

Positions 50 to 60 (EPRISRDELRE) are enriched in basic and acidic residues. A disordered region spans residues 50-71 (EPRISRDELRETASSPVTFETR). The C2H2-type zinc-finger motif lies at 224-247 (YKCKQCDYLDYRKSTMRKHTVSQH).

In terms of tissue distribution, expressed in FLP neurons.

It is found in the nucleus. Positively regulates the RNA polymerase III-associated transcription of small non-coding RNAs. The sequence is that of Transcription factor lir-3 from Caenorhabditis elegans.